We begin with the raw amino-acid sequence, 268 residues long: Octanoyltransferase (268 aa).

The 189-residue stretch at 49-237 (GTQGDVILVV…ALLKALSGEL (189 aa)) folds into the BPL/LPL catalytic domain. Residues 87-94 (RGGRITWH), 167-169 (ALG), and 180-182 (GLA) each bind substrate. Catalysis depends on cysteine 198, which acts as the Acyl-thioester intermediate.

This sequence belongs to the LipB family.

It localises to the cytoplasm. It carries out the reaction octanoyl-[ACP] + L-lysyl-[protein] = N(6)-octanoyl-L-lysyl-[protein] + holo-[ACP] + H(+). It functions in the pathway protein modification; protein lipoylation via endogenous pathway; protein N(6)-(lipoyl)lysine from octanoyl-[acyl-carrier-protein]: step 1/2. Catalyzes the transfer of endogenously produced octanoic acid from octanoyl-acyl-carrier-protein onto the lipoyl domains of lipoate-dependent enzymes. Lipoyl-ACP can also act as a substrate although octanoyl-ACP is likely to be the physiological substrate. The chain is Octanoyltransferase from Corynebacterium aurimucosum (strain ATCC 700975 / DSM 44827 / CIP 107346 / CN-1) (Corynebacterium nigricans).